The following is a 177-amino-acid chain: B-phycoerythrin beta chain (177 aa).

Residues C50 and C61 each coordinate phycourobilin. Position 72 is an N4-methylasparagine (N72). Residues C82 and C158 each coordinate (2R,3E)-phycoerythrobilin.

Belongs to the phycobiliprotein family. In terms of assembly, heteromer of 6 alpha, 6 beta and one gamma chain. Contains two covalently linked phycoerythrobilin chromophores and one covalently linked phycourobilin chromophore.

Its subcellular location is the plastid. The protein resides in the chloroplast thylakoid membrane. In terms of biological role, light-harvesting photosynthetic bile pigment-protein from the phycobiliprotein complex. The protein is B-phycoerythrin beta chain (cpeB) of Porphyridium sordidum (Red alga).